The sequence spans 952 residues: MAWPCITRACCIARFWNQLDKADIAVPLVFTKYSEATEHPGAPPQPPAPPQPGLAPPSRAVAIETQPAQGESDAVARATGPAPGPSGDRETAAAPGRSGLGLGAASGSTSGSGPADSVMRQDYRAWKVQRPEPSCRPRSEYQPSDAPFERETQYQKDFRAWPLPRRGDHPWIPKPVQIPATSQPSPPVLGMPKRRPQSQERGPIQLSADARDPEGAGGAGVPAAGKASGADQRDTRRKAGPAWMVTRTEGHEEKPLPPAQSQTQEGGPAAGKASGADQRDTRRKAGPAWMVTRTEGHEEKPLPPAQSQTQEGGPAAGKASGADQRDTRRKAGPAWMVTRTEGHEETPLPPAQSQTQEGGPAAGKASGADQRDTRRKAGPAWMVTRTEGHEETPLPPAQSQTQEGGPAAGKASGADERDTRRKAGPAWMVRRSEGHEQTTAAHAQGTGPEGGKGRAVADALNRQIREEVTSTVSSSYRNEFRAWTDIKPVKPIKAKPQYKPPDDKMVHETSYSAQFKGEASKPTTADNKVVDRRRIRSLYSEPFKESPKVEKPSVQSSKPKKTSTSQKPLRKAKDKQVASGQAAKKKTTESPSATKPDDKEQSKEMNNKLAEAKESRVKPTSDKNQGPVAKEPHKDQGPVAPGLPKGQGPAVQEPLKDQGPMVPGLPKDQAPVVPGSLKGQSPTAPGPPKDQGAVLLGPMKDLGPVAPASVKDQDHMASELLKNKDSVPLAPAKAQSPLLPEPLKNQSPVVPARAKDQSFPAPAPTPLKDPGPVIPEPEKDGAPMVPERRKDQNASIMASLKNEAPVASESVKNQGLGGPEPAKDTGTDLKGHGSVFVAPVKSQGPVVPEPTKGQDPIIPALAKDQGPILPEPPKNQGPPVVLGPIKNQDPVIPVPLKGQDPVVPAPTKDPGPTAPDPLKSQGPRGPQLPTVSPSPPVMIPTVPHAEYIEGSP.

Positions 1-15 (MAWPCITRACCIARF) are calmodulin-binding. S-palmitoyl cysteine attachment occurs at residues Cys-5, Cys-10, and Cys-11. 2 disordered regions span residues 37–457 (TEHP…RAVA) and 486–952 (IKPV…EGSP). Over residues 41–55 (GAPPQPPAPPQPGLA) the composition is skewed to pro residues. Ser-98 is subject to Phosphoserine. Low complexity predominate over residues 105–117 (ASGSTSGSGPADS). Residues 116 to 139 (DSVMRQDYRAWKVQRPEPSCRPRS) form a mn 1 region. Residues 119–139 (MRQDYRAWKVQRPEPSCRPRS) are compositionally biased toward basic and acidic residues. The tract at residues 124 to 138 (RAWKVQRPEPSCRPR) is calmodulin-binding. A Phosphotyrosine modification is found at Tyr-141. The span at 147-171 (PFERETQYQKDFRAWPLPRRGDHPW) shows a compositional bias: basic and acidic residues. A mn 2 region spans residues 151–174 (ETQYQKDFRAWPLPRRGDHPWIPK). The tract at residues 160-174 (AWPLPRRGDHPWIPK) is calmodulin-binding. Position 185 is a phosphoserine (Ser-185). Residues 187 to 201 (PVLGMPKRRPQSQER) are calmodulin-binding. Ser-207 carries the post-translational modification Phosphoserine. The segment covering 221 to 230 (VPAAGKASGA) has biased composition (low complexity). The Mc-1 repeat unit spans residues 222–267 (PAAGKASGADQRDTRRKAGPAWMVTRTEGHEEKPLPPAQSQTQEGG). The tract at residues 222–451 (PAAGKASGAD…HAQGTGPEGG (230 aa)) is 5 X approximate tandem repeat Mc. 8 calmodulin-binding regions span residues 235 to 249 (TRRK…TRTE), 280 to 294 (DTRR…VTRT), 325 to 339 (RDTR…MVTR), 373 to 387 (TRRK…TRTE), 421 to 435 (RKAG…SEGH), 481 to 495 (RAWT…IKAK), 532 to 546 (RRRI…FKES), and 559 to 573 (PKKT…RKAK). The stretch at 268–313 (PAAGKASGADQRDTRRKAGPAWMVTRTEGHEEKPLPPAQSQTQEGG) is one Mc-2 repeat. The stretch at 314–359 (PAAGKASGADQRDTRRKAGPAWMVTRTEGHEETPLPPAQSQTQEGG) is one Mc-3 repeat. The Mc-4 repeat unit spans residues 360–405 (PAAGKASGADQRDTRRKAGPAWMVTRTEGHEETPLPPAQSQTQEGG). The stretch at 406–451 (PAAGKASGADERDTRRKAGPAWMVRRSEGHEQTTAAHAQGTGPEGG) is one Mc-5 repeat. The tract at residues 473 to 496 (SSSYRNEFRAWTDIKPVKPIKAKP) is mn 3. Residues 542–551 (PFKESPKVEK) are compositionally biased toward basic and acidic residues. Residues 552-567 (PSVQSSKPKKTSTSQK) are compositionally biased toward low complexity. Ser-590 carries the phosphoserine modification. The span at 595-621 (KPDDKEQSKEMNNKLAEAKESRVKPTS) shows a compositional bias: basic and acidic residues. Position 681 is a phosphoserine (Ser-681). Basic and acidic residues predominate over residues 711 to 725 (KDQDHMASELLKNKD). Ser-736 is subject to Phosphoserine. A compositionally biased stretch (pro residues) spans 761–775 (APAPTPLKDPGPVIP). Composition is skewed to basic and acidic residues over residues 776-792 (EPEK…RKDQ) and 821-831 (PAKDTGTDLKG). A compositionally biased stretch (pro residues) spans 903–915 (VPAPTKDPGPTAP). Ser-951 is subject to Phosphoserine.

It belongs to the STOP family. As to quaternary structure, interacts with calmodulin (via C-terminus); the interaction is dependent on Ca(2+). Interacts (via C-terminus) with TMEM106B (via N-terminus). Interacts with ZDHHC13 (via ANK repeats). Interacts with ZDHHC17 (via ANK repeats). Palmitoylated. Probably depalmitoylated by ABHD17A, ABHD17B and ABHD17C. During neuronal polarization, palmitoylation and depalmitoylation cycles regulate MAP6 shuttling between secretory vesicles and microtubules, and its polarized distribution in the axon. As to expression, isoform 1 is specifically expressed in adult brain. Isoform 2 is predominantly expressed in embryonic brain; expression persists at low levels in the adult brain.

Its subcellular location is the cytoplasm. The protein resides in the cytoskeleton. The protein localises to the golgi apparatus. It localises to the cell projection. It is found in the axon. Its subcellular location is the dendrite. The protein resides in the cytoplasmic vesicle. The protein localises to the secretory vesicle membrane. In terms of biological role, involved in microtubule stabilization in many cell types, including neuronal cells. Specifically has microtubule cold stabilizing activity. Involved in dendrite morphogenesis and maintenance by regulating lysosomal trafficking via its interaction with TMEM106B. Regulates KIF5A-mediated axonal cargo transport. Regulates axonal growth during neuron polarization. The polypeptide is Microtubule-associated protein 6 (Map6) (Rattus norvegicus (Rat)).